A 90-amino-acid polypeptide reads, in one-letter code: Mu-theraphotoxin-Phlo1b (90 aa).

The first 22 residues, 1 to 22 (MKVSVLITLAVLGVMFVWTSAA), serve as a signal peptide directing secretion. The propeptide occupies 23–50 (EQEDHGSDRRDSPALLKSLGRVFQSEER). Intrachain disulfides connect Cys-52/Cys-66, Cys-59/Cys-71, and Cys-65/Cys-79. Residue Phe-85 is modified to Phenylalanine amide. Residues 86–90 (GNEKS) constitute a propeptide that is removed on maturation.

The protein belongs to the neurotoxin 10 (Hwtx-1) family. 39 (Jztx-34) subfamily. Expressed by the venom gland.

It localises to the secreted. Gating-modifier toxin that inhibits voltage-gated sodium channel Nav by shifting the threshold for channel activation to more positive potentials. This toxin moderately inhibits human Nav1.7/SCN9A (IC(50)=360 nM) and weakly inhibits hNav1.2/SCN2A (37% inhibition at 1 uM peptide) and hNav1.5/SCN5A (&lt;20% inhibition at 1 uM peptide). Inhibition of Nav1.7 is voltage-dependent, with lower inhibition at more positive test pulses. In Phlogius sp. (Tarantula spider), this protein is Mu-theraphotoxin-Phlo1b.